A 329-amino-acid chain; its full sequence is Ferredoxin--NADP reductase 2 (329 aa).

The FAD site is built by threonine 18, glutamate 37, glutamine 45, tyrosine 50, valine 90, phenylalanine 124, aspartate 285, and serine 326.

Belongs to the ferredoxin--NADP reductase type 2 family. As to quaternary structure, homodimer. FAD serves as cofactor.

The enzyme catalyses 2 reduced [2Fe-2S]-[ferredoxin] + NADP(+) + H(+) = 2 oxidized [2Fe-2S]-[ferredoxin] + NADPH. The polypeptide is Ferredoxin--NADP reductase 2 (Bacillus mycoides (strain KBAB4) (Bacillus weihenstephanensis)).